Here is a 321-residue protein sequence, read N- to C-terminus: Phospho-N-acetylmuramoyl-pentapeptide-transferase (321 aa).

Transmembrane regions (helical) follow at residues 1–21, 50–70, 76–96, 112–132, 140–160, 176–196, 200–220, 225–245, 250–270, and 300–320; these read MIFI…PILI, MGGL…IIFV, IILL…DDYI, FLAQ…FHLV, IPFV…IVFW, GLAT…SYML, AIGI…PYNL, VFMG…ISIM, LSLI…MLQV, and VVTV…WIGV.

It belongs to the glycosyltransferase 4 family. MraY subfamily. Requires Mg(2+) as cofactor.

The protein resides in the cell membrane. The enzyme catalyses UDP-N-acetyl-alpha-D-muramoyl-L-alanyl-gamma-D-glutamyl-L-lysyl-D-alanyl-D-alanine + di-trans,octa-cis-undecaprenyl phosphate = Mur2Ac(oyl-L-Ala-gamma-D-Glu-L-Lys-D-Ala-D-Ala)-di-trans,octa-cis-undecaprenyl diphosphate + UMP. The protein operates within cell wall biogenesis; peptidoglycan biosynthesis. Its function is as follows. Catalyzes the initial step of the lipid cycle reactions in the biosynthesis of the cell wall peptidoglycan: transfers peptidoglycan precursor phospho-MurNAc-pentapeptide from UDP-MurNAc-pentapeptide onto the lipid carrier undecaprenyl phosphate, yielding undecaprenyl-pyrophosphoryl-MurNAc-pentapeptide, known as lipid I. In Staphylococcus epidermidis (strain ATCC 35984 / DSM 28319 / BCRC 17069 / CCUG 31568 / BM 3577 / RP62A), this protein is Phospho-N-acetylmuramoyl-pentapeptide-transferase.